The chain runs to 345 residues: Phosphoribosylformylglycinamidine cyclo-ligase (345 aa).

The protein belongs to the AIR synthase family.

It localises to the cytoplasm. The enzyme catalyses 2-formamido-N(1)-(5-O-phospho-beta-D-ribosyl)acetamidine + ATP = 5-amino-1-(5-phospho-beta-D-ribosyl)imidazole + ADP + phosphate + H(+). It participates in purine metabolism; IMP biosynthesis via de novo pathway; 5-amino-1-(5-phospho-D-ribosyl)imidazole from N(2)-formyl-N(1)-(5-phospho-D-ribosyl)glycinamide: step 2/2. This chain is Phosphoribosylformylglycinamidine cyclo-ligase, found in Prochlorococcus marinus (strain MIT 9313).